A 176-amino-acid polypeptide reads, in one-letter code: Putative Ras-related protein RABA4e (176 aa).

It belongs to the small GTPase superfamily. Rab family.

This is Putative Ras-related protein RABA4e (RABA4E) from Arabidopsis thaliana (Mouse-ear cress).